The chain runs to 324 residues: Annexin A3 (324 aa).

4 Annexin repeats span residues Phe19 to Thr90, Ala91 to Asp162, His174 to Arg246, and Asn250 to Gly321. Lys178 carries the N6-acetyllysine modification. Thr268 carries the post-translational modification Phosphothreonine.

Belongs to the annexin family.

Inhibitor of phospholipase A2, also possesses anti-coagulant properties. The protein is Annexin A3 (Anxa3) of Rattus norvegicus (Rat).